Consider the following 116-residue polypeptide: MIDEELQQWFSHTEMLIAELLEDGTNDEVYHTIEHHFASSDFDLLEKAAIAAFKLGLEIEEPEEAELENGDKVFAFDIATEQMLDVNLIKKETQAMFELAKQCGVDYDGWGTYFEE.

This sequence belongs to the RraB family. As to quaternary structure, interacts with the C-terminal region of Rne.

The protein localises to the cytoplasm. Globally modulates RNA abundance by binding to RNase E (Rne) and regulating its endonucleolytic activity. Can modulate Rne action in a substrate-dependent manner by altering the composition of the degradosome. This chain is Regulator of ribonuclease activity B, found in Colwellia psychrerythraea (strain 34H / ATCC BAA-681) (Vibrio psychroerythus).